The chain runs to 138 residues: Nucleoside diphosphate kinase (138 aa).

The ATP site is built by Lys-9, Phe-57, Arg-85, Thr-91, Arg-102, and Asn-112. The Pros-phosphohistidine intermediate role is filled by His-115.

Belongs to the NDK family. In terms of assembly, homotetramer. Mg(2+) is required as a cofactor.

It localises to the cytoplasm. It carries out the reaction a 2'-deoxyribonucleoside 5'-diphosphate + ATP = a 2'-deoxyribonucleoside 5'-triphosphate + ADP. The catalysed reaction is a ribonucleoside 5'-diphosphate + ATP = a ribonucleoside 5'-triphosphate + ADP. Its function is as follows. Major role in the synthesis of nucleoside triphosphates other than ATP. The ATP gamma phosphate is transferred to the NDP beta phosphate via a ping-pong mechanism, using a phosphorylated active-site intermediate. The sequence is that of Nucleoside diphosphate kinase from Trichlorobacter lovleyi (strain ATCC BAA-1151 / DSM 17278 / SZ) (Geobacter lovleyi).